Consider the following 289-residue polypeptide: Phosphatidylglycerol--prolipoprotein diacylglyceryl transferase (289 aa).

7 helical membrane passes run 17–37 (LAVR…ILLG), 57–77 (MLFY…IFFY), 89–109 (IFAV…VIAA), 121–141 (WLVV…AGRI), 174–194 (QLYE…IYSA), 200–220 (GAVS…AEFF), and 235–255 (ISMG…MLVW). R140 is an a 1,2-diacyl-sn-glycero-3-phospho-(1'-sn-glycerol) binding site.

This sequence belongs to the Lgt family.

Its subcellular location is the cell inner membrane. The catalysed reaction is L-cysteinyl-[prolipoprotein] + a 1,2-diacyl-sn-glycero-3-phospho-(1'-sn-glycerol) = an S-1,2-diacyl-sn-glyceryl-L-cysteinyl-[prolipoprotein] + sn-glycerol 1-phosphate + H(+). The protein operates within protein modification; lipoprotein biosynthesis (diacylglyceryl transfer). In terms of biological role, catalyzes the transfer of the diacylglyceryl group from phosphatidylglycerol to the sulfhydryl group of the N-terminal cysteine of a prolipoprotein, the first step in the formation of mature lipoproteins. The polypeptide is Phosphatidylglycerol--prolipoprotein diacylglyceryl transferase (Nitrosospira multiformis (strain ATCC 25196 / NCIMB 11849 / C 71)).